A 799-amino-acid polypeptide reads, in one-letter code: Dipeptidyl peptidase family member 1 (799 aa).

Over 1-31 (MTAEADLLEGYDEELGGNESQKRDCKGITTA) the chain is Cytoplasmic. Residues 32 to 52 (IVVVLLILVMIFAALVFFTPL) form a helical; Signal-anchor for type II membrane protein membrane-spanning segment. The Lumenal portion of the chain corresponds to 53-799 (FAAKSFGSWR…FLRQCFYTDK (747 aa)). Residues Asn-64, Asn-138, Asn-267, and Asn-335 are each glycosylated (N-linked (GlcNAc...) asparagine). A disulfide bond links Cys-474 and Cys-477. A glycan (N-linked (GlcNAc...) asparagine) is linked at Asn-481. Cys-482 and Cys-500 are joined by a disulfide. An N-linked (GlcNAc...) asparagine glycan is attached at Asn-512. Residues Ser-669, Asp-742, and His-774 each act as charge relay system in the active site. Cys-689 and Cys-794 form a disulfide bridge.

This sequence belongs to the peptidase S9B family. DPPIV subfamily.

It localises to the cell membrane. Functionally, removes N-terminal dipeptides sequentially from polypeptides. Essential for control of distal tip cell migration. In Caenorhabditis elegans, this protein is Dipeptidyl peptidase family member 1 (dpf-1).